Reading from the N-terminus, the 96-residue chain is Invertase 7 (96 aa).

An N-terminal signal peptide occupies residues 1–19 (MLLQAFIFLLAGFAAKISA). N-linked (GlcNAc...) asparagine glycosylation occurs at asparagine 23. Substrate contacts are provided by residues 39–42 (WMND) and glutamine 60. Residue aspartate 42 is part of the active site. Residues asparagine 64 and asparagine 76 are each glycosylated (N-linked (GlcNAc...) asparagine).

The protein belongs to the glycosyl hydrolase 32 family.

It carries out the reaction Hydrolysis of terminal non-reducing beta-D-fructofuranoside residues in beta-D-fructofuranosides.. This is Invertase 7 (SUC7) from Saccharomyces cerevisiae (Baker's yeast).